The primary structure comprises 403 residues: Phosphopentomutase (403 aa).

Positions 13, 298, 303, 339, 340, and 351 each coordinate Mn(2+).

It belongs to the phosphopentomutase family. The cofactor is Mn(2+).

It localises to the cytoplasm. The enzyme catalyses 2-deoxy-alpha-D-ribose 1-phosphate = 2-deoxy-D-ribose 5-phosphate. It catalyses the reaction alpha-D-ribose 1-phosphate = D-ribose 5-phosphate. Its pathway is carbohydrate degradation; 2-deoxy-D-ribose 1-phosphate degradation; D-glyceraldehyde 3-phosphate and acetaldehyde from 2-deoxy-alpha-D-ribose 1-phosphate: step 1/2. Isomerase that catalyzes the conversion of deoxy-ribose 1-phosphate (dRib-1-P) and ribose 1-phosphate (Rib-1-P) to deoxy-ribose 5-phosphate (dRib-5-P) and ribose 5-phosphate (Rib-5-P), respectively. This chain is Phosphopentomutase, found in Streptococcus thermophilus (strain ATCC BAA-491 / LMD-9).